The primary structure comprises 241 residues: Platelet-derived growth factor subunit B (241 aa).

The first 20 residues, 1–20 (MNRCWALFLSLCCYLRLVSA), serve as a signal peptide directing secretion. Residues 21-81 (EGDPIPEELY…ELESLARGRR (61 aa)) constitute a propeptide, removed in mature form. Residue Asn-63 is glycosylated (N-linked (GlcNAc...) asparagine). Cystine bridges form between Cys-97/Cys-141, Cys-130/Cys-178, and Cys-134/Cys-180. A propeptide spans 191-241 (RSPGGSQEQRAKTPQTRVTIRTVRVRRPPKGKHRKFKHTHDKTALKETLGA) (removed in mature form). Over residues 216-230 (RRPPKGKHRKFKHTH) the composition is skewed to basic residues. Residues 216 to 241 (RRPPKGKHRKFKHTHDKTALKETLGA) are disordered.

Belongs to the PDGF/VEGF growth factor family. In terms of assembly, antiparallel homodimer; disulfide-linked. Antiparallel heterodimer with PDGFA; disulfide-linked. The PDGFB homodimer interacts with PDGFRA and PDGFRB homodimers, and with heterodimers formed by PDGFRA and PDGFRB. The heterodimer composed of PDGFA and PDGFB interacts with PDGFRB homodimers, and with heterodimers formed by PDGFRA and PDGFRB. Interacts with XLKD1. Interacts with LRP1. Interacts with SORL1 (via the N-terminal ectodomain). Interacts with CD82; this interaction inhibits PDGFB-mediated signaling pathway. In terms of tissue distribution, expressed at high levels in the heart, brain (sustantia nigra), placenta and fetal kidney. Expressed at moderate levels in the brain (hippocampus), skeletal muscle, kidney and lung.

Its subcellular location is the secreted. Functionally, growth factor that plays an essential role in the regulation of embryonic development, cell proliferation, cell migration, survival and chemotaxis. Potent mitogen for cells of mesenchymal origin. Required for normal proliferation and recruitment of pericytes and vascular smooth muscle cells in the central nervous system, skin, lung, heart and placenta. Required for normal blood vessel development, and for normal development of kidney glomeruli. Plays an important role in wound healing. Signaling is modulated by the formation of heterodimers with PDGFA. The chain is Platelet-derived growth factor subunit B (PDGFB) from Homo sapiens (Human).